Here is a 368-residue protein sequence, read N- to C-terminus: Alanine racemase (368 aa).

The active-site Proton acceptor; specific for D-alanine is the Lys-40. Lys-40 carries the N6-(pyridoxal phosphate)lysine modification. Arg-134 is a binding site for substrate. Tyr-263 functions as the Proton acceptor; specific for L-alanine in the catalytic mechanism. A substrate-binding site is contributed by Met-310.

The protein belongs to the alanine racemase family. Requires pyridoxal 5'-phosphate as cofactor.

It carries out the reaction L-alanine = D-alanine. It functions in the pathway amino-acid biosynthesis; D-alanine biosynthesis; D-alanine from L-alanine: step 1/1. Catalyzes the interconversion of L-alanine and D-alanine. May also act on other amino acids. The polypeptide is Alanine racemase (alr) (Listeria monocytogenes serotype 1/2a (strain 10403S)).